Reading from the N-terminus, the 278-residue chain is Bis(5'-nucleosyl)-tetraphosphatase, symmetrical (278 aa).

The protein belongs to the Ap4A hydrolase family.

The catalysed reaction is P(1),P(4)-bis(5'-adenosyl) tetraphosphate + H2O = 2 ADP + 2 H(+). Hydrolyzes diadenosine 5',5'''-P1,P4-tetraphosphate to yield ADP. This Methylococcus capsulatus (strain ATCC 33009 / NCIMB 11132 / Bath) protein is Bis(5'-nucleosyl)-tetraphosphatase, symmetrical.